The sequence spans 147 residues: Putative pre-16S rRNA nuclease (147 aa).

The protein belongs to the YqgF nuclease family.

The protein resides in the cytoplasm. Its function is as follows. Could be a nuclease involved in processing of the 5'-end of pre-16S rRNA. The sequence is that of Putative pre-16S rRNA nuclease from Acinetobacter baylyi (strain ATCC 33305 / BD413 / ADP1).